The following is a 192-amino-acid chain: Protein GrpE (192 aa).

The span at 1–20 (MEERNEQVVEEVKEEVKEAQ) shows a compositional bias: basic and acidic residues. The interval 1-34 (MEERNEQVVEEVKEEVKEAQVEEAVTSEDSEETV) is disordered. Residues 25-34 (VTSEDSEETV) are compositionally biased toward acidic residues.

It belongs to the GrpE family. Homodimer.

The protein resides in the cytoplasm. In terms of biological role, participates actively in the response to hyperosmotic and heat shock by preventing the aggregation of stress-denatured proteins, in association with DnaK and GrpE. It is the nucleotide exchange factor for DnaK and may function as a thermosensor. Unfolded proteins bind initially to DnaJ; upon interaction with the DnaJ-bound protein, DnaK hydrolyzes its bound ATP, resulting in the formation of a stable complex. GrpE releases ADP from DnaK; ATP binding to DnaK triggers the release of the substrate protein, thus completing the reaction cycle. Several rounds of ATP-dependent interactions between DnaJ, DnaK and GrpE are required for fully efficient folding. The protein is Protein GrpE of Bacillus cereus (strain AH187).